The following is a 166-amino-acid chain: MASQASLLLQKQLKDLCKHPVDGFSAGLVDEKNIFEWSVTIIGPPDTLYEGGFFNAIMTFPQNYPNSPPTVRFTSDMWHPNVYSDGRVCISILHPPGDDPSGYELASERWTPVHTVESIMLSIISMLSGPNDESPANVEAAKEWRDKRDEFKKKVSRCVRKSQEMF.

Position 2 is an N-acetylalanine (A2). A UBC core domain is found at 4–164 (QASLLLQKQL…VSRCVRKSQE (161 aa)). C89 functions as the Glycyl thioester intermediate in the catalytic mechanism.

Belongs to the ubiquitin-conjugating enzyme family.

It carries out the reaction S-ubiquitinyl-[E1 ubiquitin-activating enzyme]-L-cysteine + [E2 ubiquitin-conjugating enzyme]-L-cysteine = [E1 ubiquitin-activating enzyme]-L-cysteine + S-ubiquitinyl-[E2 ubiquitin-conjugating enzyme]-L-cysteine.. Its pathway is protein modification; protein ubiquitination. In terms of biological role, accepts the ubiquitin from the E1 complex and catalyzes its covalent attachment to other proteins. Involved in the formation of multiubiquitin chains. Signal the protein for selective degradation. The protein is Ubiquitin-conjugating enzyme E2 7 (UBC7) of Arabidopsis thaliana (Mouse-ear cress).